We begin with the raw amino-acid sequence, 346 residues long: Probable aldo-keto reductase 2 (346 aa).

Residue Y63 is the Proton donor of the active site. Residue H131 participates in substrate binding. 210-220 (SPLGRGFLAAG) serves as a coordination point for NADP(+).

It belongs to the aldo/keto reductase family. Aldo/keto reductase 13 subfamily.

This is Probable aldo-keto reductase 2 (AGD2) from Arabidopsis thaliana (Mouse-ear cress).